The chain runs to 70 residues: DNA-directed RNA polymerase subunit omega (70 aa).

Belongs to the RNA polymerase subunit omega family. As to quaternary structure, the RNAP catalytic core consists of 2 alpha, 1 beta, 1 beta' and 1 omega subunit. When a sigma factor is associated with the core the holoenzyme is formed, which can initiate transcription.

The enzyme catalyses RNA(n) + a ribonucleoside 5'-triphosphate = RNA(n+1) + diphosphate. Its function is as follows. Promotes RNA polymerase assembly. Latches the N- and C-terminal regions of the beta' subunit thereby facilitating its interaction with the beta and alpha subunits. This chain is DNA-directed RNA polymerase subunit omega, found in Staphylococcus epidermidis (strain ATCC 35984 / DSM 28319 / BCRC 17069 / CCUG 31568 / BM 3577 / RP62A).